Here is a 231-residue protein sequence, read N- to C-terminus: 7-cyano-7-deazaguanine synthase (231 aa).

ATP is bound at residue 8 to 18 (FSGGQDSTTCL). The Zn(2+) site is built by Cys188, Cys197, Cys200, and Cys203.

This sequence belongs to the QueC family. The cofactor is Zn(2+).

It carries out the reaction 7-carboxy-7-deazaguanine + NH4(+) + ATP = 7-cyano-7-deazaguanine + ADP + phosphate + H2O + H(+). It functions in the pathway purine metabolism; 7-cyano-7-deazaguanine biosynthesis. In terms of biological role, catalyzes the ATP-dependent conversion of 7-carboxy-7-deazaguanine (CDG) to 7-cyano-7-deazaguanine (preQ(0)). In Salmonella newport (strain SL254), this protein is 7-cyano-7-deazaguanine synthase.